The chain runs to 246 residues: MSLQWTAVATFLYAEVFVVLLLCIPFISPKRWQKIFKSRLVELLVSYGNTFFVVLIVILVLLVIDAVREIRKYDDVTEKVNLQNNPGAMEHFHMKLFRAQRNLYIAGFSLLLSFLLRRLVTLISQQATLLASNEAFKKQAESASEAAKKYMEENDQLKKGAAVDGGKLDVGNAEVKLEEENRSLKADLQKLKDELASTKQKLEKAENQVLAMRKQSEGLTKEYDRLLEEHAKLQAAVDGPMDKKEE.

Over 2–6 (SLQWT) the chain is Lumenal. Residues 7 to 27 (AVATFLYAEVFVVLLLCIPFI) traverse the membrane as a helical segment. Residues 28-43 (SPKRWQKIFKSRLVEL) are Cytoplasmic-facing. The helical transmembrane segment at 44–64 (LVSYGNTFFVVLIVILVLLVI) threads the bilayer. At 65 to 102 (DAVREIRKYDDVTEKVNLQNNPGAMEHFHMKLFRAQRN) the chain is on the lumenal side. A helical membrane pass occupies residues 103-123 (LYIAGFSLLLSFLLRRLVTLI). The Cytoplasmic segment spans residues 124–246 (SQQATLLASN…VDGPMDKKEE (123 aa)). A coiled-coil region spans residues 165 to 237 (GGKLDVGNAE…EEHAKLQAAV (73 aa)). Residues 243–246 (KKEE) carry the Di-lysine motif motif.

Belongs to the BCAP29/BCAP31 family. In terms of assembly, homodimer and heterodimer with BCAP29. Binds CASP8 (isoform 9) as a complex containing BCAP31, BCAP29, BCL2 and/or BCL2L1. Forms a complex (via C-terminus) with TOMM40 which mediates the translocation of components of the mitochondrial membrane respiratory chain NADH dehydrogenase (Complex I) from the cytosol to the mitochondria; within the complex BCAP31 interacts directly with unprocessed and processed NDUFS4 and NDUFB11. Interacts with VDAC1. Interacts with VAMP3, VAMP1 and membrane IgD immunoglobulins. Interacts with HACD2. Interacts with DNM1L; may form part of a larger protein complex at the endoplasmic reticulum-mitochondrial interface during mitochondrial fission. (Microbial infection) Interacts (via C-terminus) with HRSV membrane protein SH; this interaction is direct. Cleaved by CASP8 and other caspases. As to expression, ubiquitous. Highly expressed in neurons and discrete endocrine cells.

The protein resides in the endoplasmic reticulum membrane. The protein localises to the endoplasmic reticulum-Golgi intermediate compartment membrane. Functionally, functions as a chaperone protein. Is one of the most abundant endoplasmic reticulum (ER) proteins. Plays a role in the export of secreted proteins in the ER, the recognition of abnormally folded protein and their targeting to the ER associated-degradation (ERAD). Also serves as a cargo receptor for the export of transmembrane proteins. Plays a role in the assembly of the mitochondrial membrane respiratory chain NADH dehydrogenase (Complex I) by stimulating the translocation of NDUFS4 and NDUFB11 from the cytosol to the mitochondria via interaction with TOMM40. In response to ER stress, delocalizes from the ER-mitochondria contact sites and binds BCL2. May be involved in CASP8-mediated apoptosis. In Homo sapiens (Human), this protein is B-cell receptor-associated protein 31.